Reading from the N-terminus, the 100-residue chain is MKQPLKNTKRSNYKRKKRERVIALIPTKTNLTSPDKSLTPLPKEIIDYKNVILLRNGITAEGKIFPRRFTKLNAKQQRYMSKAIKNARMVGLLPFVKKSK.

This sequence belongs to the bacterial ribosomal protein bS18 family. Part of the 30S ribosomal subunit.

Its subcellular location is the plastid. The protein resides in the chloroplast. This is Small ribosomal subunit protein bS18c from Pleurastrum terricola (Filamentous green alga).